Reading from the N-terminus, the 233-residue chain is Uridylate kinase (233 aa).

9 to 10 contacts ATP; sequence GS. Gly-43 contacts UMP. Positions 44 and 48 each coordinate ATP. UMP contacts are provided by residues Asp-65 and 113-119; that span reads VTPGQTT. Positions 139, 145, and 148 each coordinate ATP.

It belongs to the UMP kinase family. As to quaternary structure, homohexamer.

It is found in the cytoplasm. The catalysed reaction is UMP + ATP = UDP + ADP. Its pathway is pyrimidine metabolism; CTP biosynthesis via de novo pathway; UDP from UMP (UMPK route): step 1/1. Inhibited by UTP. In terms of biological role, catalyzes the reversible phosphorylation of UMP to UDP. In Methanosarcina mazei (strain ATCC BAA-159 / DSM 3647 / Goe1 / Go1 / JCM 11833 / OCM 88) (Methanosarcina frisia), this protein is Uridylate kinase.